A 554-amino-acid chain; its full sequence is Flavin-dependent halogenase ascD (554 aa).

FAD is bound by residues Gly15, Gly18, and Glu48. Chloride contacts are provided by Ser331 and Gly332. Residue Val333 coordinates FAD.

Belongs to the flavin-dependent halogenase family.

The catalysed reaction is ilicicolin B + FADH2 + chloride + O2 = ilicicolin A + FAD + 2 H2O + H(+). The protein operates within secondary metabolite biosynthesis; terpenoid biosynthesis. Functionally, flavin-dependent halogenase; part of the asc-1 gene cluster that mediates the biosynthesis of both ascochlorin and ascofuranone, a strong inhibitor of cyanide-insensitive alternative oxidases and a promising drug candidate against African trypanosomiasis. The first step in the pathway is performed by the non-reducing polyketide synthase ascC that produces orsellinic acid by condensing acetyl-CoA with 3 malonyl-CoA units. Orsellinic acid is then prenylated by the prenyltransferase ascA to yield ilicicolinic acid B. Ilicicolinic acid B is further reduced to ilicicolin B by the reductase ascB. The halogenase ascD then chlorinates ilicicolin B to produce ilicicolin A which is converted to ilicicolin A epoxide by the cytochrome P450 monooxygenase ascE that catalyzes stereoselective epoxidation of the terminal double bond of the prenyl group. Ilicicolin A epoxide is the last common precursor for the biosynthesis of ascofuranone and ascochlorin. The terpene cyclase ascF produces a monocyclic terpene, and the cyclization reaction is proposed to be initiated by protonation of the terminal epoxide of ilicicolin A epoxide to generate a monocyclic tertiarycation, which is followed by a series of hydride and methyl shifts with abstraction of proton, leading to the formation of the (14S,15R,19R)-trimethylcyclohexanone ring structure of ilicicolin C, which is finally reduced to ascochlorin by the dehydrogenase ascG. On the other hand, ilicicolin A epoxide is hydroxylated by the cytochrome P450 monooxygenase ascH, and the resultant product is cyclized by the terpene cyclase ascI to ascofuranol via protonation-initiated epoxide ring opening, which facilitates the 6-endo-tet cyclization to form the tetrahy-drofuran ring. Finally, ascofuranol is oxidized into ascofuranone by ascJ. The sequence is that of Flavin-dependent halogenase ascD from Acremonium egyptiacum (Oospora egyptiaca).